A 211-amino-acid polypeptide reads, in one-letter code: Protein-L-isoaspartate O-methyltransferase (211 aa).

Ser60 is an active-site residue.

This sequence belongs to the methyltransferase superfamily. L-isoaspartyl/D-aspartyl protein methyltransferase family.

Its subcellular location is the cytoplasm. It carries out the reaction [protein]-L-isoaspartate + S-adenosyl-L-methionine = [protein]-L-isoaspartate alpha-methyl ester + S-adenosyl-L-homocysteine. Its function is as follows. Catalyzes the methyl esterification of L-isoaspartyl residues in peptides and proteins that result from spontaneous decomposition of normal L-aspartyl and L-asparaginyl residues. It plays a role in the repair and/or degradation of damaged proteins. The chain is Protein-L-isoaspartate O-methyltransferase from Pseudomonas syringae pv. syringae (strain B728a).